A 115-amino-acid polypeptide reads, in one-letter code: Iron-sulfur cluster insertion protein ErpA (115 aa).

C42, C106, and C108 together coordinate iron-sulfur cluster.

This sequence belongs to the HesB/IscA family. In terms of assembly, homodimer. It depends on iron-sulfur cluster as a cofactor.

Required for insertion of 4Fe-4S clusters for at least IspG. The sequence is that of Iron-sulfur cluster insertion protein ErpA from Baumannia cicadellinicola subsp. Homalodisca coagulata.